A 955-amino-acid chain; its full sequence is Sex determination protein fruitless (955 aa).

2 disordered regions span residues 1–55 (MMAT…HAHS) and 70–89 (IETD…LPLP). Over residues 35-55 (PHGHGHLHSHAHAHGHGHAHS) the composition is skewed to basic residues. Over residues 76-89 (APPPPLPPPPLPLP) the composition is skewed to pro residues. The BTB domain occupies 131 to 196 (CDVTLACEGE…MYKGEVNVGQ (66 aa)). Disordered stretches follow at residues 229–288 (LRDS…SMSE), 352–526 (NRSA…LGGG), and 784–814 (ANHQ…SGAG). The segment covering 233-246 (AASSPTGRGPSNYT) has biased composition (polar residues). Composition is skewed to basic and acidic residues over residues 258–279 (AMRE…DELT) and 360–379 (CSDR…RDDL). The segment covering 387-420 (KDNNNSNSSSTGGNNNNNNNNNNNSSSNNNNSSS) has biased composition (low complexity). A compositionally biased stretch (basic and acidic residues) spans 421–446 (NRERNNSGERERERERERERDRDREL). 2 stretches are compositionally biased toward low complexity: residues 464 to 475 (SSSNCDNSLSSS) and 790 to 814 (QHPP…SGAG). Residues 918–941 (HECPVCGQKFTRRDNMKAHCKIKH) form a C2H2-type zinc finger.

Expressed in parts of the adult male brain associated with the courtship song and steps of the male courtship. Also expressed in the larval and pupal male mushroom body and optic lobe. Expressed in pupal female optic lobe.

It localises to the nucleus. Functionally, probably acts as a transcriptional regulator. Part of the somatic sex determination hierarchy; sex determination genes transformer (tra) and transformer-2 (tra-2) switch fru splicing from the male-specific pattern to the female-specific pattern through activation of the female-specific fru 5'-splice site. Vital for the development of males and females. Controls the development of the male specific abdominal muscle of Lawrence. Plays a role in male courtship behavior and sexual orientation. Enhances male-specific expression of takeout in brain-associated fat body. This Drosophila melanogaster (Fruit fly) protein is Sex determination protein fruitless (fru).